The following is a 217-amino-acid chain: Chorionic somatomammotropin hormone 1 (217 aa).

Residues Met-1–Ala-26 form the signal peptide. A Zn(2+)-binding site is contributed by His-44. The cysteines at positions 79 and 191 are disulfide-linked. Zn(2+) is bound at residue Glu-200. Residues Cys-208 and Cys-215 are joined by a disulfide bond.

Belongs to the somatotropin/prolactin family. In terms of assembly, can be found in a monomeric as well as dimeric form.

It is found in the secreted. In terms of biological role, produced only during pregnancy and is involved in stimulating lactation, fetal growth and metabolism. Does not interact with GHR but only activates PRLR through zinc-induced dimerization. The chain is Chorionic somatomammotropin hormone 1 (CSH1) from Homo sapiens (Human).